Reading from the N-terminus, the 165-residue chain is S-ribosylhomocysteine lyase (165 aa).

Residues His-54, His-58, and Cys-128 each coordinate Fe cation.

Belongs to the LuxS family. Homodimer. Fe cation serves as cofactor.

The catalysed reaction is S-(5-deoxy-D-ribos-5-yl)-L-homocysteine = (S)-4,5-dihydroxypentane-2,3-dione + L-homocysteine. Its function is as follows. Involved in the synthesis of autoinducer 2 (AI-2) which is secreted by bacteria and is used to communicate both the cell density and the metabolic potential of the environment. The regulation of gene expression in response to changes in cell density is called quorum sensing. Catalyzes the transformation of S-ribosylhomocysteine (RHC) to homocysteine (HC) and 4,5-dihydroxy-2,3-pentadione (DPD). The polypeptide is S-ribosylhomocysteine lyase (Helicobacter hepaticus (strain ATCC 51449 / 3B1)).